We begin with the raw amino-acid sequence, 300 residues long: Acetyl-coenzyme A carboxylase carboxyl transferase subunit beta 1 (300 aa).

In terms of domain architecture, CoA carboxyltransferase N-terminal spans 26–294 (MWVKCPSCGD…HTSAAQHVPA (269 aa)). Residues cysteine 30, cysteine 33, cysteine 49, and cysteine 51 each coordinate Zn(2+). The C4-type zinc-finger motif lies at 30 to 51 (CPSCGDLIYTRQFSDNLKVCKC).

Belongs to the AccD/PCCB family. Acetyl-CoA carboxylase is a heterohexamer composed of biotin carboxyl carrier protein (AccB), biotin carboxylase (AccC) and two subunits each of ACCase subunit alpha (AccA) and ACCase subunit beta (AccD). Zn(2+) serves as cofactor.

The protein resides in the cytoplasm. It catalyses the reaction N(6)-carboxybiotinyl-L-lysyl-[protein] + acetyl-CoA = N(6)-biotinyl-L-lysyl-[protein] + malonyl-CoA. The protein operates within lipid metabolism; malonyl-CoA biosynthesis; malonyl-CoA from acetyl-CoA: step 1/1. Component of the acetyl coenzyme A carboxylase (ACC) complex. Biotin carboxylase (BC) catalyzes the carboxylation of biotin on its carrier protein (BCCP) and then the CO(2) group is transferred by the transcarboxylase to acetyl-CoA to form malonyl-CoA. This Roseiflexus sp. (strain RS-1) protein is Acetyl-coenzyme A carboxylase carboxyl transferase subunit beta 1.